A 317-amino-acid polypeptide reads, in one-letter code: MEKVYVAGAIPEVGLKLLQEHFEVEMYEGKGLVDKDTLIKGVKNATALISLLSTNVDKDVIDAGKDLKIIANYGAGFNNIDIEYAREKSIDVTNTPKASTNATADLTIGLVLAIARRIVEGDQLSRTTGFDGWAPLFFRGREVSGKTIGIIGLGEIGSAVARRARAFDMDVLYTGPNRKEEKEREIGAKYVDLDTLLKNADFITINAAYNPKMHHLIDTEQFKMMKSTAYLINASRGPIVHEQALVQALKDNEIEGAALDVYEFEPDITDDLKSLNNVVLTPHIGNATFEARDMMSKIVANAAISAVQGEKPQFVVN.

NAD(+) contacts are provided by residues 155–156 (EI), 234–236 (ASR), and D260. R236 is a catalytic residue. E265 is an active-site residue. Catalysis depends on H283, which acts as the Proton donor. 283-286 (HIGN) serves as a coordination point for NAD(+).

Belongs to the D-isomer specific 2-hydroxyacid dehydrogenase family.

This is Putative 2-hydroxyacid dehydrogenase SAB2178 from Staphylococcus aureus (strain bovine RF122 / ET3-1).